The sequence spans 157 residues: Protein Smg (157 aa).

This sequence belongs to the Smg family.

This chain is Protein Smg, found in Klebsiella pneumoniae (strain 342).